The following is a 210-amino-acid chain: MDFYYLPLSAPCRSVIMTAKALGIELNKKLLNLFEGEHLKPEFLKINPQHTIPTLVDNGFAMWESRAIMVYLVEKYGKQNDPLYPSCPKKRALINQRLYFDMGTLWKSYADYTYPQFRENKPADPELFKKFESALEFLNIFLSQSKYAAGETMTLADLAILASVSTFDVVQMDLSKYEHILRWYNMLKDTAPGAAENWAGCLEMKKYFKK.

The 80-residue stretch at 1 to 80 folds into the GST N-terminal domain; that stretch reads MDFYYLPLSA…YLVEKYGKQN (80 aa). Residues serine 9, 50–52, and 64–66 contribute to the glutathione site; these read HTI and ESR. The GST C-terminal domain maps to 87–208; that stretch reads CPKKRALINQ…AGCLEMKKYF (122 aa).

This sequence belongs to the GST superfamily. Theta family. Homodimer.

The enzyme catalyses RX + glutathione = an S-substituted glutathione + a halide anion + H(+). In terms of biological role, conjugation of reduced glutathione to a wide number of exogenous and endogenous hydrophobic electrophiles. The polypeptide is Glutathione S-transferase 2 (Gst2) (Musca domestica (House fly)).